The following is a 586-amino-acid chain: MQAGARFQRRRRQLQQQQPRRRQPLLWPMDAEPPPPPPWVWMVPGSAGLLRLSAGVVVPPVLLASAPPPAAPLLPGLPGWPAPSEPVLPLLPLPSAPDSAAAAAAHPFPALHGQWLFGGHSPSLGLPPSSTVELVPVFPHLCPSALATPIGKSWIDKRIPNCKIFFNNSFALDSTWIHPEESRFFHGHEKPRLLANQVAVSLSRPAPASRPLPTVVLAPQPIPGGCHNSLKVTSSPAIAIATAAAAAMVSVDPENLRGPSPSSVQPRHFLTLAPIKIPLRTSPVSDTRTERGRVARPPALMLRAQKSRDGDKEDKEPPPMLGGGEDSTARGNRPVASTPVPGSPWCVVWTGDDRVFFFNPTMHLSVWEKPMDLKDRGDLNRIIEDPPHKRKLEAPATDNSDGSSSEDNREDQDVKTKRNRTEGCGSPKPEEAKREDKGTRTPPPQILLPLEERVTHFRDMLLERGVSAFSTWEKELHKIVFDPRYLLLNSEERKQIFEQFVKTRIKEEYKEKKSKLLLAKEEFKKLLEESKVSPRTTFKEFAEKYGRDQRFRLVQKRKDQEHFFNQFILILKKRDKENRLRLRKMR.

Residues 1 to 30 (MQAGARFQRRRRQLQQQQPRRRQPLLWPMD) are disordered. Residues 7-23 (FQRRRRQLQQQQPRRRQ) are compositionally biased toward basic residues. The 34-residue stretch at 148 to 181 (TPIGKSWIDKRIPNCKIFFNNSFALDSTWIHPEE) folds into the WW 1 domain. 2 disordered regions span residues 281–344 (TSPV…PGSP) and 378–448 (DLNR…QILL). Residues 306 to 317 (KSRDGDKEDKEP) show a composition bias toward basic and acidic residues. In terms of domain architecture, WW 2 spans 339 to 372 (PVPGSPWCVVWTGDDRVFFFNPTMHLSVWEKPMD). Basic and acidic residues-rich tracts occupy residues 378–387 (DLNRIIEDPP), 411–421 (DQDVKTKRNRT), and 428–439 (KPEEAKREDKGT). 2 FF domains span residues 450–503 (LEER…FVKT) and 515–570 (KLLL…FILI).

The chain is Transcription elongation regulator 1-like protein (TCERG1L) from Homo sapiens (Human).